A 426-amino-acid polypeptide reads, in one-letter code: Proline--tRNA ligase (426 aa).

This sequence belongs to the class-II aminoacyl-tRNA synthetase family. ProS type 2 subfamily. Homodimer.

Its subcellular location is the cytoplasm. The catalysed reaction is tRNA(Pro) + L-proline + ATP = L-prolyl-tRNA(Pro) + AMP + diphosphate. In terms of biological role, catalyzes the attachment of proline to tRNA(Pro) in a two-step reaction: proline is first activated by ATP to form Pro-AMP and then transferred to the acceptor end of tRNA(Pro). In Anaplasma phagocytophilum (strain HZ), this protein is Proline--tRNA ligase.